Reading from the N-terminus, the 212-residue chain is F-box protein GID2 (212 aa).

The tract at residues 1 to 74 (MKFRSDSSGG…AGEGEQPRVP (74 aa)) is disordered. Over residues 35-59 (DPSSSSSQGEASSSSQPPPQQQQEE) the composition is skewed to low complexity. One can recognise an F-box domain in the interval 70 to 116 (QPRVPDLGEDLVFEVLRRAEARTLAAAACVSRGWRQLAEDERLWEAA).

Part of some SCF(GID2) complex, which consist of a SKP1 protein, CUL1, GID2 and some RING box protein. Interacts directly with SKP2 and SKP15. Interacts directly with DELLA protein SLR1. May have a higher affinity for phosphorylated SLR1 proteins. In terms of tissue distribution, widely expressed. Preferentially expressed in unopened flowers, shoot apices and elongation stem. Expressed at lower level in the leaf blades, leaf sheaths, roots and rachis.

Its subcellular location is the nucleus. It participates in protein modification; protein ubiquitination. In terms of biological role, essential component of some SCF-type E3 ligase complex that positively regulates the gibberellin signaling pathway. Upon gibberellin treatment, the complex mediates the ubiquitination and subsequent degradation of DELLA protein SLR1, a repressor of the gibberellin pathway, leading to activate the pathway. The protein is F-box protein GID2 (GID2) of Oryza sativa subsp. japonica (Rice).